The chain runs to 390 residues: Neuromedin-B receptor (390 aa).

The segment covering 1–19 (MPSKSLSNLSVTTGANESG) has biased composition (polar residues). A disordered region spans residues 1–22 (MPSKSLSNLSVTTGANESGSVP). At 1 to 41 (MPSKSLSNLSVTTGANESGSVPEGWERDFLPASDGTTTELV) the chain is on the extracellular side. Residues Asn-8 and Asn-16 are each glycosylated (N-linked (GlcNAc...) asparagine). The chain crosses the membrane as a helical span at residues 42-65 (IRCVIPSLYLLIITVGLLGNIMLV). At 66 to 79 (KIFITNSAMRSVPN) the chain is on the cytoplasmic side. The chain crosses the membrane as a helical span at residues 80-99 (IFISNLAAGDLLLLLTCVPV). Residues 100–117 (DASRYFFDEWMFGKVGCK) are Extracellular-facing. Cys-116 and Cys-198 are oxidised to a cystine. Residues 118 to 139 (LIPVIQLTSVGVSVFTLTALSA) form a helical membrane-spanning segment. The Cytoplasmic portion of the chain corresponds to 140–156 (DRYRAIVNPMDMQTSGA). The helical transmembrane segment at 157-177 (LLRTCVKAMGIWVVSVLLAVP) threads the bilayer. Over 178–211 (EAVFSEVARISSLDNSSFTACIPYPQTDELHPKI) the chain is Extracellular. The N-linked (GlcNAc...) asparagine glycan is linked to Asn-192. A helical transmembrane segment spans residues 212–235 (HSVLIFLVYFLIPLAIISIYYYHI). The Cytoplasmic segment spans residues 236–266 (AKTLIKSAHNLPGEYNEHTKKQMETRKRLAK). Residues 267-287 (IVLVFVGCFIFCWFPNHILYM) traverse the membrane as a helical segment. At 288 to 299 (YRSFNYNEIDPS) the chain is on the extracellular side. The chain crosses the membrane as a helical span at residues 300–327 (LGHMIVTLVARVLSFGNSCVNPFALYLL). Residues 328-390 (SESFRRHFNS…GHSMKQEMAL (63 aa)) lie on the Cytoplasmic side of the membrane. A lipid anchor (S-palmitoyl cysteine) is attached at Cys-341. Ser-352 is modified (phosphoserine).

Belongs to the G-protein coupled receptor 1 family. In terms of tissue distribution, expressed in epididymis (at protein level).

The protein localises to the cell membrane. Its function is as follows. Receptor for neuromedin-B. Contributes to the maintenance of basal sigh rate through signaling in the pre-Botzinger complex, a cluster of several thousand neurons in the ventrolateral medulla responsible for inspiration during respiratory activity. Contributes to the induction of sneezing following exposure to chemical irritants or allergens which causes release of NMB by nasal sensory neurons and activation of NMBR-expressing neurons in the sneeze-evoking region of the brainstem. These in turn activate neurons of the caudal ventral respiratory group, giving rise to the sneezing response. Contributes to induction of acute itch, possibly through its activation on dorsal root ganglion neurons by the NMB peptide. Plays a role in the innate immune response to influenza A virus infection by enhancing interferon alpha expression and reducing expression of IL6. Plays a role in CSF1-induced proliferation of osteoclast precursors by contributing to the positive regulation of the expression of the CSF1 receptor CSF1R. The protein is Neuromedin-B receptor (NMBR) of Homo sapiens (Human).